The sequence spans 258 residues: UPF0246 protein Asuc_0575 (258 aa).

Belongs to the UPF0246 family.

The protein is UPF0246 protein Asuc_0575 of Actinobacillus succinogenes (strain ATCC 55618 / DSM 22257 / CCUG 43843 / 130Z).